A 177-amino-acid polypeptide reads, in one-letter code: MSRVAKNPVTVPAGVEVKFGTEALVIKGKNGELSFPLHSDVAIEFNDGKLTFVANNSSKQANAMSGTARALVSNMVKGVSEGFEKKLQLMGVGYRAQAQGKILNLSLGFSHPIVYEMPEGVSVQTPSQTEIVLTGSDKQVVGQVASEIRAFRAPEPYKGKGVRYVGEVVVMKEAKKK.

Belongs to the universal ribosomal protein uL6 family. As to quaternary structure, part of the 50S ribosomal subunit.

Functionally, this protein binds to the 23S rRNA, and is important in its secondary structure. It is located near the subunit interface in the base of the L7/L12 stalk, and near the tRNA binding site of the peptidyltransferase center. This chain is Large ribosomal subunit protein uL6, found in Neisseria gonorrhoeae (strain ATCC 700825 / FA 1090).